A 393-amino-acid chain; its full sequence is ATP phosphoribosyltransferase regulatory subunit (393 aa).

Belongs to the class-II aminoacyl-tRNA synthetase family. HisZ subfamily. As to quaternary structure, heteromultimer composed of HisG and HisZ subunits.

It localises to the cytoplasm. It functions in the pathway amino-acid biosynthesis; L-histidine biosynthesis; L-histidine from 5-phospho-alpha-D-ribose 1-diphosphate: step 1/9. Its function is as follows. Required for the first step of histidine biosynthesis. May allow the feedback regulation of ATP phosphoribosyltransferase activity by histidine. The protein is ATP phosphoribosyltransferase regulatory subunit of Chromohalobacter salexigens (strain ATCC BAA-138 / DSM 3043 / CIP 106854 / NCIMB 13768 / 1H11).